The following is a 1007-amino-acid chain: Serine/threonine-protein kinase PRP4 homolog (1007 aa).

Residues 1-102 (MAATEPPSLR…LSPAKRTKLD (102 aa)) are disordered. Alanine 2 carries the N-acetylalanine modification. Serine 8, serine 21, serine 24, and serine 33 each carry phosphoserine. 2 stretches are compositionally biased toward basic residues: residues 40–60 (KHSR…KHKH) and 68–82 (KKHK…HKRK). Basic and acidic residues predominate over residues 83–92 (EVIEASDKEG). A phosphoserine mark is found at serine 88 and serine 94. N6-acetyllysine; alternate is present on lysine 100. Residue lysine 100 forms a Glycyl lysine isopeptide (Lys-Gly) (interchain with G-Cter in SUMO2); alternate linkage. Residue lysine 112 forms a Glycyl lysine isopeptide (Lys-Gly) (interchain with G-Cter in SUMO2) linkage. Lysine 118 is covalently cross-linked (Glycyl lysine isopeptide (Lys-Gly) (interchain with G-Cter in SUMO2); alternate). Lysine 118 is covalently cross-linked (Glycyl lysine isopeptide (Lys-Gly) (interchain with G-Cter in SUMO1); alternate). A Phosphoserine modification is found at serine 132. Tyrosine 141 is subject to Phosphotyrosine. Disordered regions lie at residues 141-535 (YESG…EDEE) and 560-583 (NISV…SPDD). Residues serine 143, serine 145, and serine 167 each carry the phosphoserine modification. The span at 158-169 (GNRSSTRSSSTR) shows a compositional bias: low complexity. Residues lysine 171 and lysine 178 each participate in a glycyl lysine isopeptide (Lys-Gly) (interchain with G-Cter in SUMO2) cross-link. Basic residues-rich tracts occupy residues 180 to 203 (SAKK…RKSK) and 215 to 231 (RSKS…SKRS). Residues serine 240, serine 242, serine 258, serine 278, serine 292, and serine 294 each carry the phosphoserine modification. Basic and acidic residues predominate over residues 248 to 271 (RSQEKVGKARSPAEEKMKSEEKGK). The segment covering 294 to 303 (SPVDLRDKSK) has biased composition (basic and acidic residues). Residues 304–315 (DRRSRSKERKSK) are compositionally biased toward basic residues. A compositionally biased stretch (basic and acidic residues) spans 316–325 (RSEIDKEKKP). 5 positions are modified to phosphoserine: serine 328, serine 354, serine 356, serine 366, and serine 368. Basic residues predominate over residues 342–367 (PSRRPGRSPKRRSLSPKLRDKSRRSR). Threonine 385 carries the phosphothreonine modification. Serine 387 bears the Phosphoserine mark. Basic and acidic residues-rich tracts occupy residues 395-408 (RSLE…ERRR) and 415-429 (RPRD…RSKD). A phosphoserine mark is found at serine 427, serine 431, and serine 437. Over residues 438–497 (PTRRRSRSPIRRRSRSPLRRSRSPRRRSRSPRRRDRSRRSRSRLRRRSRSRGGHRRRSRS) the composition is skewed to basic residues. Serine 518, serine 519, serine 520, serine 565, serine 569, serine 576, serine 578, and serine 580 each carry phosphoserine. Acidic residues predominate over residues 518–535 (SSSDDNLEDFDVEEEDEE). Over residues 562–581 (SVPSEPSSPQSSTRSRSPSP) the composition is skewed to low complexity. Residues lysine 593 and lysine 659 each participate in a glycyl lysine isopeptide (Lys-Gly) (interchain with G-Cter in SUMO2) cross-link. Positions 687–1006 (YNVYGYTGQG…ALQHAFIQEK (320 aa)) constitute a Protein kinase domain. Residues 693-701 (TGQGVFSNV) and lysine 717 each bind ATP. An N6-acetyllysine modification is found at lysine 717. Aspartate 815 (proton acceptor) is an active-site residue. A Phosphotyrosine modification is found at tyrosine 849. Phosphoserine is present on serine 852.

This sequence belongs to the protein kinase superfamily. CMGC Ser/Thr protein kinase family. As to quaternary structure, interacts with CLK1 C-terminus. Associates with the U5 snRNP and NCOR1 deacetylase complexes. Identified in the spliceosome C complex. Phosphorylated by CLK1. Autophosphorylated; phosphorylation inhibits interaction with its targets, such as PRPF6 or SMARCA4.

The protein resides in the nucleus. Its subcellular location is the chromosome. The protein localises to the centromere. It is found in the kinetochore. The enzyme catalyses L-seryl-[protein] + ATP = O-phospho-L-seryl-[protein] + ADP + H(+). It carries out the reaction L-threonyl-[protein] + ATP = O-phospho-L-threonyl-[protein] + ADP + H(+). Serine/threonine kinase involved in spliceosomal assembly as well as mitosis and signaling regulation. Connects chromatin mediated regulation of transcription and pre-mRNA splicing. During spliceosomal assembly, interacts with and phosphorylates PRPF6 and PRPF31, components of the U4/U6-U5 tri-small nuclear ribonucleoprotein (snRNP), to facilitate the formation of the spliceosome B complex. Plays a role in regulating transcription and the spindle assembly checkpoint (SAC). Associates with U5 snRNP and NCOR1 deacetylase complexes which may allow a coordination of pre-mRNA splicing with chromatin remodeling events involved in transcriptional regulation. Associates and probably phosphorylates SMARCA4 and NCOR1. Phosphorylates SRSF1. Associates with kinetochores during mitosis and is necessary for recruitment and maintenance of the checkpoint proteins such as MAD1L1 and MAD12L1 at the kinetochores. Phosphorylates and regulates the activity of the transcription factors such as ELK1 and KLF13. Phosphorylates nuclear YAP1 and WWTR1/TAZ which induces nuclear exclusion and regulates Hippo signaling pathway, involved in tissue growth control. This Mus musculus (Mouse) protein is Serine/threonine-protein kinase PRP4 homolog (Prp4k).